Consider the following 314-residue polypeptide: MKGPGFHFDVHTDLRADQKAEVLIEALPWLEEFAGQRIVVKYGGNAMVDDHLKQCFAEDMVFLRQVGLHPIVVHGGGPQISHMLKALGIKSEFKGGLRVTTPEAMDVVRMVLTGKVSRELVGLINAHGPLAVGLSGEDGGLFSAMQRRPIINGKPTDIGLVGDVVSVDASAVEDLVAAGRIPVVSSVAPNEEDATEVLNVNADSAAAALAAAVGAHKLVILTDVDGLYADWPDKNSLIGRIGVETLRDMLPDLESGMRPKMEACVRAIDGGVPQAHIIDGRKPHSILNEIFTSAGIGTMVMPDEGLEMRSSYGY.

Residues 76-77 (GG), Arg98, and Asn199 contribute to the substrate site.

This sequence belongs to the acetylglutamate kinase family. ArgB subfamily.

It localises to the cytoplasm. The enzyme catalyses N-acetyl-L-glutamate + ATP = N-acetyl-L-glutamyl 5-phosphate + ADP. The protein operates within amino-acid biosynthesis; L-arginine biosynthesis; N(2)-acetyl-L-ornithine from L-glutamate: step 2/4. Catalyzes the ATP-dependent phosphorylation of N-acetyl-L-glutamate. This chain is Acetylglutamate kinase, found in Bifidobacterium longum (strain DJO10A).